The following is a 258-amino-acid chain: UPF0246 protein YaaA (258 aa).

The protein belongs to the UPF0246 family.

The chain is UPF0246 protein YaaA from Escherichia coli (strain K12 / MC4100 / BW2952).